The following is a 181-amino-acid chain: MGLYVSRLFNRLFQKKDVRILMVGLDAAGKTTILYKVKLGEVVTTIPTIGFNVETVEFRNISFTVWDVGGQDKIRPLWRHYYSNTDGLIFVVDSNDRERIDDAREGLHRMINEEELKDAIILVFANKQDLPNAMSAAEVTEKLHLNTIRERNWFIQSTCATRGDGLYEGFDWLTTHLNNAK.

A lipid anchor (N-myristoyl glycine) is attached at glycine 2. GTP contacts are provided by residues 24–31 (GLDAAGKT), 126–129 (NKQD), and alanine 160.

Belongs to the small GTPase superfamily. Arf family. In terms of assembly, may interact with GTPase RAB5b.

Its subcellular location is the golgi apparatus membrane. The catalysed reaction is GTP + H2O = GDP + phosphate + H(+). Alternates between an inactive GDP-bound form and an active GTP-bound form. Intrinsic GTPase activity is almost undetectable in vitro. Activated by a guanine nucleotide-exchange factor (GEF) and inactivated by GTPase-activating protein ARFGAP1. In terms of biological role, small GTPase involved in protein trafficking between different compartments. Modulates vesicle budding and uncoating within the Golgi complex. In its GTP-bound form, triggers the recruitment of coatomer proteins to the Golgi membrane. The hydrolysis of ARF1-bound GTP, which is mediated by ARFGAPs proteins, is required for dissociation of coat proteins from Golgi membranes and vesicles. Regulates the transport of N-acylated AK2 to the parasitophorous vacuole membrane. May be involved in the activation of lipid kinase PIP5K. The polypeptide is ADP-ribosylation factor 1 (ARF1) (Plasmodium falciparum (isolate NF54)).